Here is a 418-residue protein sequence, read N- to C-terminus: Voltage-gated ClC-type chloride channel ClcB (418 aa).

A run of 10 helical transmembrane segments spans residues 5–25, 54–74, 146–166, 168–188, 222–242, 258–278, 291–311, 316–336, 352–372, and 380–400; these read LLIATVVGILAAFAVAGFRHA, LLTPALGGLAAGLLLMGWQKF, LWIACGAAAGMAAAYRAPLAG, LFIAEVLFGTMMLASLGPVII, ALIISTGVLAGLCGPLLLTLM, WQLALGGLIVGLLSLFTPAVW, APPLLMIIAGIFLCKLCAVLA, GAPGGVFTPTLFIGLAIGMLY, LLLGLTGMATLLAATTHAPIM, and MTGEYQLLPGLLIACVIASVI.

Belongs to the chloride channel (TC 2.A.49) family. ClcB subfamily.

It is found in the cell inner membrane. Its function is as follows. Probably acts as an electrical shunt for an outwardly-directed proton pump that is linked to amino acid decarboxylation, as part of the extreme acid resistance (XAR) response. This is Voltage-gated ClC-type chloride channel ClcB from Escherichia coli (strain ATCC 8739 / DSM 1576 / NBRC 3972 / NCIMB 8545 / WDCM 00012 / Crooks).